The primary structure comprises 235 residues: Large ribosomal subunit protein uL1 (235 aa).

Belongs to the universal ribosomal protein uL1 family. In terms of assembly, part of the 50S ribosomal subunit.

Functionally, binds directly to 23S rRNA. The L1 stalk is quite mobile in the ribosome, and is involved in E site tRNA release. Protein L1 is also a translational repressor protein, it controls the translation of the L11 operon by binding to its mRNA. This chain is Large ribosomal subunit protein uL1, found in Fervidobacterium nodosum (strain ATCC 35602 / DSM 5306 / Rt17-B1).